The chain runs to 136 residues: MTSLSRPRVEFISTILQTVLNLGLLCLGLILVVFLGKETVHLADVLFAPEQTSKYELVEGLVVYFLYFEFIALIVKYFQSGFHFPLRYFVYIGITAIVRLIIVDHKSPLDVLIYSAAILLLVITLWLCNSKRLKRE.

4 helical membrane-spanning segments follow: residues 15-35 (ILQTVLNLGLLCLGLILVVFL), 55-75 (YELVEGLVVYFLYFEFIALIV), 82-102 (FHFPLRYFVYIGITAIVRLII), and 108-128 (PLDVLIYSAAILLLVITLWLC).

It belongs to the PsiE family.

Its subcellular location is the cell inner membrane. In Escherichia coli (strain SE11), this protein is Protein PsiE.